The sequence spans 275 residues: MAQVQMPVLETVRDNIGIAPFPEAKEHILEVKNLNIYYGEKRAVNDISMRIDKHAVTALIGPSGCGKSTFLRSINRMNDLIPSARTSGEIRYEGLNILDSNINVVNLRREIGMVFQKPNPFPKSIYSNITHALKYAGERRKSVLDEIVEESLTKAALWDEVKDRLHESALSLSGGQQQRLCIARTLAMKPEVLLLDEPASALDPISNAKIEELIVGLKEEYSIIIVTHNMQQASRISDQTAFFLNGDLIEYDRTEKIFMNPSEKKTEDYINGRFG.

Residues 29 to 270 (LEVKNLNIYY…PSEKKTEDYI (242 aa)) form the ABC transporter domain. 61-68 (GPSGCGKS) lines the ATP pocket.

Belongs to the ABC transporter superfamily. Phosphate importer (TC 3.A.1.7) family. As to quaternary structure, the complex is composed of two ATP-binding proteins (PstB), two transmembrane proteins (PstC and PstA) and a solute-binding protein (PstS).

Its subcellular location is the cell membrane. It catalyses the reaction phosphate(out) + ATP + H2O = ADP + 2 phosphate(in) + H(+). Functionally, part of the ABC transporter complex PstSACB involved in phosphate import. Responsible for energy coupling to the transport system. The sequence is that of Phosphate import ATP-binding protein PstB 2 from Bacillus licheniformis (strain ATCC 14580 / DSM 13 / JCM 2505 / CCUG 7422 / NBRC 12200 / NCIMB 9375 / NCTC 10341 / NRRL NRS-1264 / Gibson 46).